A 1396-amino-acid polypeptide reads, in one-letter code: ATP-dependent helicase/nuclease subunit A (1396 aa).

The segment at 1-25 (MNREALCHDDPIGHDRLRPDSIPRD) is disordered. In terms of domain architecture, UvrD-like helicase ATP-binding spans 26–532 (PKWTDEQWQA…IDLAKNFRSR (507 aa)). 47–54 (AAAGAGKT) contributes to the ATP binding site. 2 disordered regions span residues 590-649 (DADG…GQPT) and 1171-1205 (HSPE…PSPD). Residues 615 to 920 (HKNIAKAGES…RIMSIHKSKG (306 aa)) form the UvrD-like helicase C-terminal domain. Residues 1181-1199 (TPPSLEIPPSLETPPSLET) are compositionally biased toward low complexity.

This sequence belongs to the helicase family. AddA subfamily. In terms of assembly, heterodimer of AddA and AddB/RexB. The cofactor is Mg(2+).

The enzyme catalyses Couples ATP hydrolysis with the unwinding of duplex DNA by translocating in the 3'-5' direction.. It catalyses the reaction ATP + H2O = ADP + phosphate + H(+). Functionally, the heterodimer acts as both an ATP-dependent DNA helicase and an ATP-dependent, dual-direction single-stranded exonuclease. Recognizes the chi site generating a DNA molecule suitable for the initiation of homologous recombination. The AddA nuclease domain is required for chi fragment generation; this subunit has the helicase and 3' -&gt; 5' nuclease activities. This is ATP-dependent helicase/nuclease subunit A from Heliobacterium modesticaldum (strain ATCC 51547 / Ice1).